The following is a 490-amino-acid chain: MSQTTVPVDRIVPFHRFDDAIGLRNSILVWTLRFDDVLDAAKLRDSLNALLSIGNWKRLGGRVRKKRDGKLEVHIPESFTPQHPAADFSHTKLDCCIDEHALGRRLPVATEKPKLYESSTIFHEFATRENPPLTIEDYCNSDLPQIGLHVVSFTDATLVSVSWPHTMSDAVGIQTLLINWSRVMAGREIEVQHLEDVESNPLDNLEAGEGGTLKQEEWILKSSLVTGVWFVIWVIRYIWTIIWVSQESKLIYLPARTIKALRREAEDSLVEQTQTLVPGHLEKPFVSDGDVITAWAVRMACLHQASQQTSQQSITIINALDVRARLPDLFKQNTAYVGNFAFALFTKTTVGQVMSTSLGELAHTVRRSLLEQVPQAQIRAMFQELRKTRMGALIVGTATSSPLIFSNWSKTKICEVVDFSPAVIRPGKQGPVISEPGKPVYHHSLHTKRSQTARDAFNILGKDPAGNYWIAAWLPPCAWPRIKEEMQKLP.

Catalysis depends on His165, which acts as the Proton acceptor.

This sequence belongs to the plant acyltransferase family.

The protein operates within mycotoxin biosynthesis. In terms of biological role, O-acetyltransferase; part of the 2 gene clusters that mediate the biosynthesis of fusicoccins, diterpene glucosides that display phytohormone-like activity and function as potent activators of plasma membrane H(+)-ATPases in plants by modifying 14-3-3 proteins and cause the plant disease constriction canker. The first step in the pathway is performed by the fusicoccadiene synthase PaFS that possesses both prenyl transferase and terpene cyclase activity, converting isopentenyl diphosphate and dimethylallyl diphosphate into geranylgeranyl diphosphate (GGDP) and successively converting GGDP into fusicocca-2,10(14)-diene, a precursor for fusicoccin H. The second step is the oxidation at the C-8 position by the cytochrome P450 monooxygenase PaP450-2 to yield fusicocca-2,10(14)-diene-8-beta-ol. The cytochrome P450 monooxygenase PaP450-1 then catalyzes the hydroxylation at the C-16 position to produce fusicocca-2,10(14)-diene-8-beta,16-diol. The dioxygenase fc-dox then catalyzes the 16-oxydation of fusicocca-2,10(14)-diene-8-beta,16-diol to yield an aldehyde (8-beta-hydroxyfusicocca-1,10(14)-dien-16-al). The short-chain dehydrogenase/reductase fc-sdr catalyzes the reduction of the aldehyde to yield fusicocca-1,10(14)-diene-8-beta,16-diol. The next step is the hydroxylation at C-9 performed by the cytochrome P450 monooxygenase PaP450-3 that leads to fusicoccin H aglycon which is glycosylated to fusicoccin H by the O-glycosyltransferase PaGT. Hydroxylation at C-12 by the cytochrome P450 monooxygenase PaP450-4 leads then to the production of fusicoccin Q and is followed by methylation by the O-methyltransferase PaMT to yield fusicoccin P. Fusicoccin P is further converted to fusicoccin J via prenylation by the O-glucose prenyltransferase PaPT. Cytochrome P450 monooxygenase PaP450-5 then performs hydroxylation at C-19 to yield dideacetyl-fusicoccin A which is acetylated to 3'-O-deacetyl-fusicoccin A by the O-acetyltransferase PaAT-2. Finally, a another acetylation by the O-acetyltransferase PaAT-1 yields fusicoccin A. The polypeptide is O-acetyltransferase PaAT-2 (Phomopsis amygdali (Fusicoccum amygdali)).